The chain runs to 122 residues: Toxin CSTX-1 (122 aa).

A signal peptide spans 1-20 (MKVLIISAVLFITIFSNISA). The propeptide occupies 21–47 (EIEDDFLEDESFEAEDIIPFFENEQAR). Cystine bridges form between Cys-49–Cys-64, Cys-56–Cys-73, Cys-63–Cys-91, and Cys-75–Cys-89. The interval 99 to 112 (AIETGLNIFRGLFK) is predicted alpha-helix. Residue Arg-108 is modified to Arginine amide; in CSTX-2a. A Lysine amide; in omega-ctenitoxin-Cs1a modification is found at Lys-121.

The protein belongs to the neurotoxin 19 (CSTX) family. 04 (U1-Lctx) subfamily. In terms of assembly, monomer. Interacts with CSTX-13 (AC P83919) (Kd=430 nM), but does not interact with CSTX-9 (AC P58604). In terms of tissue distribution, expressed by the venom gland.

The protein localises to the secreted. The protein resides in the target cell membrane. In terms of biological role, spider venom toxin that shows calcium channel blocking activity and exhibits cytolytic activity by affecting the outer leaflet curvature and/or pore formation across the membrane. It blocks L-type calcium channels (Cav1/CACNA1) in mammalian neurons at nanomolar concentrations. Furthermore, it produces a slow voltage-independent block of mid/low and high voltage-activated calcium channels in cockroach neurons. Potassium ions, histamine, M-ctenitoxin-Cs1a (AC P83619), CSTX-9 (AC P58604), and CSTX-13 (AC P83919) synergistically increase the insecticidal activity of this toxin. In vivo, it causes paralysis in blow flies and provokes death in drosophila. Blocks voltage-activated calcium channels (Cav). Does not induce cell membrane permeability increase when tested on Xenopus oocytes. No alpha-helical structures are detectable. Is 7-fold less neurotoxic than omega-ctenitoxin-Cs1a on drosophila flies. Functionally, blocks voltage-activated calcium channels (Cav). Is 190-fold less neurotoxic than omega-ctenitoxin-Cs1a on drosophila flies. The sequence is that of Toxin CSTX-1 from Cupiennius salei (American wandering spider).